The sequence spans 1501 residues: Protein SNQ2 (1501 aa).

A compositionally biased stretch (polar residues) spans 1 to 17 (MSNIKSTQDSSHNAVAR). A disordered region spans residues 1–56 (MSNIKSTQDSSHNAVARSSSASFAASEESFTGITHDKDEQSDTPADKLTKMLTGPA). Residue S2 is modified to N-acetylserine. Residues 18–30 (SSSASFAASEESF) show a composition bias toward low complexity. Phosphoserine occurs at positions 26 and 29. Basic and acidic residues predominate over residues 34 to 49 (THDKDEQSDTPADKLT). Phosphoserine occurs at positions 64, 80, and 86. The ABC transporter 1 domain maps to 161 to 410 (FKGIKAKRHQ…FAKMGYLCPP (250 aa)). N273, N334, and N518 each carry an N-linked (GlcNAc...) asparagine glycan. A run of 5 helical transmembrane segments spans residues 521 to 541 (YTVI…SLFY), 554 to 574 (GGVL…NISF), 600 to 620 (LASF…LFFL), 628 to 648 (GSFF…NGLF), and 664 to 680 (ISGI…TYMI). A glycan (N-linked (GlcNAc...) asparagine) is linked at N730. Residues 771–789 (FGILWCFLLGYVVLKVIFT) traverse the membrane as a helical segment. Residues 853 to 1095 (FIWKDVCFTI…ILNYFERNGA (243 aa)) enclose the ABC transporter 2 domain. N874 carries N-linked (GlcNAc...) asparagine glycosylation. 889-896 (GESGAGKT) serves as a coordination point for ATP. Position 1153 is a phosphothreonine (T1153). The next 4 helical transmembrane spans lie at 1190-1212 (IMSK…FNVG), 1216-1236 (VGLQ…APAM), 1277-1296 (HLFF…RIFF), and 1333-1352 (ANVI…GVTQ). N1401 is a glycosylation site (N-linked (GlcNAc...) asparagine). The chain crosses the membrane as a helical span at residues 1455-1475 (FGIFWIYIFFNIIAMVCVYYL).

The protein belongs to the ABC transporter superfamily. ABCG family. PDR (TC 3.A.1.205) subfamily.

Its subcellular location is the membrane. Could be an ATP-dependent permease. Confers hyper-resistance to the mutagens 4-nitroquinoline-N-oxide (4-NQO) and triaziquone, as well as to the chemicals sulphomethuron methyl phenanthroline when present in multiple copies. Exhibits nucleoside triphosphatase activity. This is Protein SNQ2 (SNQ2) from Saccharomyces cerevisiae (strain ATCC 204508 / S288c) (Baker's yeast).